Reading from the N-terminus, the 1037-residue chain is MEVVGDFEYCKRDLVGHGAFAVVFRGRHRQKTDWEVAIKSINKKNLSKSQILLGKEIKILKELQHENIVALYDVQELPNSVFLVMEYCNGGDLADYLQAKGTLSEDTIRVFLHQIAAAMRILHSKGIIHRDLKPQNILLSYANRRKSNVSGIRIKIADFGFARYLHSNTMAATLCGSPMYMAPEVIMSQHYDAKADLWSIGTVIYQCLVGKPPFQANSPQDLRMFYEKNRSLMPSIPRETSPYLANLLLGLLQRNQKDRMDFEAFFSHPFLEQVPVKKSCPVPVPVYSGPVPGSSCSSSPSCRFASPPSLPDMQHIQEENLSSPPLGPPNYLQVSKDSASNSSKNSSCDTDDFVLVPHNISSDHSYDMPMGTTARRASNEFFMCGGQCQPTVSPHSETAPIPVPTQVRNYQRIEQNLISTASSGTNPHGSPRSAVVRRSNTSPMGFLRVGSCSPVPGDTVQTGGRRLSTGSSRPYSPSPLVGTIPEQFSQCCCGHPQGHEARSRHSSGSPVPQTQAPQSLLLGARLQSAPTLTDIYQNKQKLRKQHSDPVCPSHAGAGYSYSPQPSRPGSLGTSPTKHTGSSPRNSDWFFKTPLPTIIGSPTKTTAPFKIPKTQASSNLLALVTRHGPAESQSKDGNDPRECSHCLSVQGSERHRSEQQQSKAVFGRSVSTGKLSEQQVKAPLGGHQGSTDSLNTERPMDVAPAGACGVMLALPAGTAASARAVLFTVGSPPHSATAPTCTHMVLRTRTTSVGSSSSGGSLCSASGRVCVGSPPGPGLGSSPPGAEGAPSLRYVPYGASPPSLEGLITFEAPELPEETLMEREHTDTLRHLNMMLMFTECVLDLTAVRGGNPELCTSAVSLYQIQESVVVDQISQLSKDWGRVEQLVLYMKAAQLLAASLHLAKAQVKSGKLSPSMAVKQVVKNLNERYKFCITMCKKLTEKLNRFFSDKQRFIDEINSVTAEKLIYNCAVEMVQSAALDEMFQQTEDIVYRYHKAALLLEGLSKILQDPTDVENVHKYKCSIERRLSALCCSTATV.

Residues Tyr-9–Leu-271 form the Protein kinase domain. Residues Val-15–Val-23 and Lys-39 contribute to the ATP site. Asp-131 acts as the Proton acceptor in catalysis. A disordered region spans residues Glu-319–Thr-350. Residues Ser-335–Cys-348 show a composition bias toward low complexity. Ser-430 carries the post-translational modification Phosphoserine. 4 disordered regions span residues Cys-452 to Leu-480, Gly-494 to Gln-515, Gln-540 to Leu-594, and His-626 to Arg-697. 2 stretches are compositionally biased toward polar residues: residues Ser-506–Gln-515 and Leu-571–Asn-585. The span at Gln-632–Ser-643 shows a compositional bias: basic and acidic residues. The span at Gln-658–Gln-678 shows a compositional bias: polar residues. 2 positions are modified to phosphoserine: Ser-772 and Ser-781. A CTD-like region region spans residues Glu-813–Val-1037.

The protein belongs to the protein kinase superfamily. Ser/Thr protein kinase family. APG1/unc-51/ULK1 subfamily. As to quaternary structure, component of a complex consisting of ATG13/KIAA0652, ULK1 and RB1CC1/FIP200. Interacts (via C-terminus) with ATG13/KIAA0652. Associates with the mammalian target of rapamycin complex 1 (mTORC1) through an interaction with RPTOR. Interacts with SYNGAP1. Autophosphorylated. In response to nutrient limitation, probably phosphorylated and activated by AMPK, leading to activate autophagy. As to expression, widely expressed.

It localises to the cytoplasmic vesicle membrane. The enzyme catalyses L-seryl-[protein] + ATP = O-phospho-L-seryl-[protein] + ADP + H(+). The catalysed reaction is L-threonyl-[protein] + ATP = O-phospho-L-threonyl-[protein] + ADP + H(+). Serine/threonine-protein kinase involved in autophagy in response to starvation. Acts upstream of phosphatidylinositol 3-kinase PIK3C3 to regulate the formation of autophagophores, the precursors of autophagosomes. Part of regulatory feedback loops in autophagy: acts both as a downstream effector and a negative regulator of mammalian target of rapamycin complex 1 (mTORC1) via interaction with RPTOR. Activated via phosphorylation by AMPK, also acts as a negative regulator of AMPK through phosphorylation of the AMPK subunits PRKAA1, PRKAB2 and PRKAG1. May phosphorylate ATG13/KIAA0652, FRS2, FRS3 and RPTOR; however such data need additional evidences. Not involved in ammonia-induced autophagy or in autophagic response of cerebellar granule neurons (CGN) to low potassium concentration. Plays a role early in neuronal differentiation and is required for granule cell axon formation: may govern axon formation via Ras-like GTPase signaling and through regulation of the Rab5-mediated endocytic pathways within developing axons. This is Serine/threonine-protein kinase ULK2 (Ulk2) from Mus musculus (Mouse).